The chain runs to 497 residues: Histone-lysine N-methyltransferase ASHR3 (497 aa).

A PHD-type zinc finger spans residues Met118–Ala186. The AWS domain maps to Asp283–Lys326. The region spanning Lys326–Arg443 is the SET domain. The Post-SET domain occupies Pro449–Gly465.

Belongs to the class V-like SAM-binding methyltransferase superfamily. Histone-lysine methyltransferase family. SET2 subfamily. In terms of assembly, interacts with AMS/bHLH21 by its SET domain and PHD finger. In terms of tissue distribution, expressed in roots, flowers and buds, the anther and in stamen filaments.

It localises to the nucleus. The protein localises to the chromosome. It catalyses the reaction L-lysyl-[histone] + S-adenosyl-L-methionine = N(6)-methyl-L-lysyl-[histone] + S-adenosyl-L-homocysteine + H(+). Its function is as follows. Histone methyltransferase. Involved in stamen development. In Arabidopsis thaliana (Mouse-ear cress), this protein is Histone-lysine N-methyltransferase ASHR3 (ASHR3).